Here is a 187-residue protein sequence, read N- to C-terminus: MRLVLLGPPGSGKGTQAAQMKETLQIPHISTGDLLRSEVVAGTPLGLQAKQVMAQGDLVSDAILIGMLESRLSHTDVVKGFILDGYPRNLSQAAALDGLLAKFGHPLNAVVQLEVPTDVLVERIAGRAQAEGREDDTPDAVRKRLQVYNDSTAPVIGFYQQRGILLRVDGVGRLDEVSQRIAVALGC.

Residue 10-15 (GSGKGT) participates in ATP binding. An NMP region spans residues 30–59 (STGDLLRSEVVAGTPLGLQAKQVMAQGDLV). AMP contacts are provided by residues Thr-31, Arg-36, 57 to 59 (DLV), 85 to 88 (GYPR), and Gln-92. The LID stretch occupies residues 126 to 136 (GRAQAEGREDD). An ATP-binding site is contributed by Arg-127. Arg-133 and Arg-144 together coordinate AMP. Gly-172 contributes to the ATP binding site.

This sequence belongs to the adenylate kinase family. As to quaternary structure, monomer.

Its subcellular location is the cytoplasm. The catalysed reaction is AMP + ATP = 2 ADP. The protein operates within purine metabolism; AMP biosynthesis via salvage pathway; AMP from ADP: step 1/1. Its function is as follows. Catalyzes the reversible transfer of the terminal phosphate group between ATP and AMP. Plays an important role in cellular energy homeostasis and in adenine nucleotide metabolism. The protein is Adenylate kinase of Xylella fastidiosa (strain M12).